Here is a 577-residue protein sequence, read N- to C-terminus: Arginine--tRNA ligase (577 aa).

A 'HIGH' region motif is present at residues 122–132 (PNVAKEMHVGH).

The protein belongs to the class-I aminoacyl-tRNA synthetase family. Monomer.

It localises to the cytoplasm. The catalysed reaction is tRNA(Arg) + L-arginine + ATP = L-arginyl-tRNA(Arg) + AMP + diphosphate. The polypeptide is Arginine--tRNA ligase (Shigella flexneri).